The sequence spans 312 residues: Pantothenate synthetase (312 aa).

42–49 is a binding site for ATP; that stretch reads MGALHTGH. Catalysis depends on His-49, which acts as the Proton donor. Gln-73 is a (R)-pantoate binding site. Residue Gln-73 coordinates beta-alanine. ATP is bound at residue 159-162; that stretch reads GEKD. Gln-165 provides a ligand contact to (R)-pantoate. ATP is bound by residues Val-188 and 196–199; that span reads LSSR.

The protein belongs to the pantothenate synthetase family. As to quaternary structure, homodimer.

It localises to the cytoplasm. It catalyses the reaction (R)-pantoate + beta-alanine + ATP = (R)-pantothenate + AMP + diphosphate + H(+). It functions in the pathway cofactor biosynthesis; (R)-pantothenate biosynthesis; (R)-pantothenate from (R)-pantoate and beta-alanine: step 1/1. In terms of biological role, catalyzes the condensation of pantoate with beta-alanine in an ATP-dependent reaction via a pantoyl-adenylate intermediate. In Rhodococcus jostii (strain RHA1), this protein is Pantothenate synthetase.